The primary structure comprises 351 residues: Fructose-1,6-bisphosphatase class 1 (351 aa).

Residues E94, D113, L115, and D116 each contribute to the Mg(2+) site. Residues 116 to 119 (DGSS) and N207 contribute to the substrate site. Position 279 (E279) interacts with Mg(2+).

It belongs to the FBPase class 1 family. As to quaternary structure, homotetramer. Requires Mg(2+) as cofactor.

Its subcellular location is the cytoplasm. The catalysed reaction is beta-D-fructose 1,6-bisphosphate + H2O = beta-D-fructose 6-phosphate + phosphate. It functions in the pathway carbohydrate biosynthesis; gluconeogenesis. This chain is Fructose-1,6-bisphosphatase class 1, found in Methylobacterium radiotolerans (strain ATCC 27329 / DSM 1819 / JCM 2831 / NBRC 15690 / NCIMB 10815 / 0-1).